The primary structure comprises 244 residues: 1-(5-phosphoribosyl)-5-[(5-phosphoribosylamino)methylideneamino] imidazole-4-carboxamide isomerase (244 aa).

Asp-7 acts as the Proton acceptor in catalysis. Catalysis depends on Asp-129, which acts as the Proton donor.

This sequence belongs to the HisA/HisF family.

It is found in the cytoplasm. The catalysed reaction is 1-(5-phospho-beta-D-ribosyl)-5-[(5-phospho-beta-D-ribosylamino)methylideneamino]imidazole-4-carboxamide = 5-[(5-phospho-1-deoxy-D-ribulos-1-ylimino)methylamino]-1-(5-phospho-beta-D-ribosyl)imidazole-4-carboxamide. The protein operates within amino-acid biosynthesis; L-histidine biosynthesis; L-histidine from 5-phospho-alpha-D-ribose 1-diphosphate: step 4/9. The sequence is that of 1-(5-phosphoribosyl)-5-[(5-phosphoribosylamino)methylideneamino] imidazole-4-carboxamide isomerase from Pseudoalteromonas atlantica (strain T6c / ATCC BAA-1087).